A 512-amino-acid chain; its full sequence is Hyaluronidase PH-20 (512 aa).

The N-terminal stretch at 1 to 35 is a signal peptide; sequence MGELRFKHLFWGSFVESGGTFQTVLIFLLIPCSLT. N-linked (GlcNAc...) asparagine glycosylation is present at N46. 2 cysteine pairs are disulfide-bonded: C60–C351 and C223–C237. E147 functions as the Proton donor in the catalytic mechanism. An N-linked (GlcNAc...) asparagine glycan is attached at N165. N-linked (GlcNAc...) asparagine glycans are attached at residues N293 and N368. 3 disulfide bridges follow: C376–C387, C381–C435, and C437–C464.

The protein belongs to the glycosyl hydrolase 56 family.

The protein localises to the cell membrane. The enzyme catalyses Random hydrolysis of (1-&gt;4)-linkages between N-acetyl-beta-D-glucosamine and D-glucuronate residues in hyaluronate.. In terms of biological role, involved in sperm-egg adhesion. Upon fertilization sperm must first penetrate a layer of cumulus cells that surrounds the egg before reaching the zona pellucida. The cumulus cells are embedded in a matrix containing hyaluronic acid which is formed prior to ovulation. This protein aids in penetrating the layer of cumulus cells by digesting hyaluronic acid. This is Hyaluronidase PH-20 (Spam1) from Mus musculus (Mouse).